A 399-amino-acid chain; its full sequence is Inositol polyphosphate 1-phosphatase (399 aa).

Residue D54 coordinates Li(+). E79 is a Mg(2+) binding site. E80 is a binding site for Li(+). Mg(2+) is bound by residues D153 and I155. 1D-myo-inositol 1,4-bisphosphate-binding residues include D156, S157, T158, S267, K269, G289, A290, K293, and T311. D316 lines the Mg(2+) pocket. The residue at position 317 (S317) is a Phosphoserine.

This sequence belongs to the inositol monophosphatase superfamily. Monomer. It depends on Mg(2+) as a cofactor. In terms of tissue distribution, ubiquitously expressed, with highest levels in pancreas and kidney.

The catalysed reaction is 1D-myo-inositol 1,4-bisphosphate + H2O = 1D-myo-inositol 4-phosphate + phosphate. It catalyses the reaction 1D-myo-inositol 1,3,4-trisphosphate + H2O = 1D-myo-inositol 3,4-bisphosphate + phosphate. The protein operates within signal transduction; phosphatidylinositol signaling pathway. Its activity is regulated as follows. Inhibited by Li(+). Its function is as follows. Mg(2+)-dependent phosphatase that catalyzes the hydrolysis of the 1-position phosphate from inositol 1,4-bisphosphate and inositol 1,3,4-trisphosphate and participates in inositol phosphate metabolism. The protein is Inositol polyphosphate 1-phosphatase of Homo sapiens (Human).